The following is a 175-amino-acid chain: Microfibril-associated glycoprotein 3 (175 aa).

Residues 1 to 175 are Cytoplasmic-facing; it reads FRTEGAEKLQ…KDGSFESCQL (175 aa). Residues 85 to 175 form a disordered region; that stretch reads KERPALNAQD…KDGSFESCQL (91 aa). A compositionally biased stretch (polar residues) spans 145–175; that stretch reads QDSSHFSPPDDTGSTESNSNYKDGSFESCQL.

Post-translationally, glycosylated.

The protein localises to the cell membrane. Its function is as follows. Component of the elastin-associated microfibrils. In Bos taurus (Bovine), this protein is Microfibril-associated glycoprotein 3 (MFAP3).